The primary structure comprises 375 residues: UPF0612 protein C569.003 (375 aa).

It belongs to the UPF0612 family.

Its subcellular location is the cytoplasm. The protein is UPF0612 protein C569.003 of Schizosaccharomyces pombe (strain 972 / ATCC 24843) (Fission yeast).